The sequence spans 125 residues: Ribonuclease P protein component (125 aa).

It belongs to the RnpA family. Consists of a catalytic RNA component (M1 or rnpB) and a protein subunit.

It carries out the reaction Endonucleolytic cleavage of RNA, removing 5'-extranucleotides from tRNA precursor.. RNaseP catalyzes the removal of the 5'-leader sequence from pre-tRNA to produce the mature 5'-terminus. It can also cleave other RNA substrates such as 4.5S RNA. The protein component plays an auxiliary but essential role in vivo by binding to the 5'-leader sequence and broadening the substrate specificity of the ribozyme. The protein is Ribonuclease P protein component of Rhodococcus jostii (strain RHA1).